A 545-amino-acid polypeptide reads, in one-letter code: Beta-sesquiphellandrene synthase (545 aa).

Asp-299, Asp-303, Asn-443, Ser-447, and Glu-451 together coordinate Mg(2+). The short motif at 299-303 is the DDXXD motif element; that stretch reads DDIMD.

It belongs to the terpene synthase family. Mg(2+) is required as a cofactor. Requires Mn(2+) as cofactor.

The protein resides in the cytoplasm. The catalysed reaction is (2E,6E)-farnesyl diphosphate = beta-sesquiphellandrene + diphosphate. The protein operates within secondary metabolite biosynthesis; terpenoid biosynthesis. Its function is as follows. Sesquiterpene synthase converting farnesyl diphosphate into beta-sesquiphellandrene and six minor products, zingiberene, 7-epi-sesquithujene, sesquisabinene A, (E)-alpha-bergamotene, (E)-beta-farnesene and beta-bisabolene. Can also accept geranyl diphosphate as substrate, producing nine monoterpenes, with myrcene and limonene as the major products. In Sorghum bicolor (Sorghum), this protein is Beta-sesquiphellandrene synthase (TPS2).